The sequence spans 193 residues: Cysteine and glycine-rich protein 1 (193 aa).

Positions 10-61 (CGVCQKTVYFAEEVQCEGNSFHKSCFLCMVCKKNLDSTTVAVHGEEIYCKSC) constitute an LIM zinc-binding 1 domain. The short motif at 64 to 69 (KKYGPK) is the Nuclear localization signal element. A Phosphoserine modification is found at Ser81. Residue Lys84 is modified to N6-acetyllysine. Lys91 participates in a covalent cross-link: Glycyl lysine isopeptide (Lys-Gly) (interchain with G-Cter in SUMO2). An N6-acetyllysine mark is found at Lys112, Lys131, Lys137, and Lys161. Positions 119–170 (CPRCSQAVYAAEKVIGAGKSWHKACFRCAKCGKGLESTTLADKDGEIYCKGC) constitute an LIM zinc-binding 2 domain. Ser192 is modified (phosphoserine).

Interacts with ASCC1; ASCC2 and TRIP4.

It localises to the nucleus. Could play a role in neuronal development. The chain is Cysteine and glycine-rich protein 1 (CSRP1) from Pongo abelii (Sumatran orangutan).